The sequence spans 146 residues: uncharacterized protein (146 aa).

The helical transmembrane segment at 7-27 (FVLSITIVLVILIIIAYIWYN) threads the bilayer.

Belongs to the asfivirus E146L family.

Its subcellular location is the host membrane. It localises to the virion. This is an uncharacterized protein from Ornithodoros (relapsing fever ticks).